Reading from the N-terminus, the 537-residue chain is CTP synthase (537 aa).

The interval 1–268 (MGETKYIFVT…DSTILEKMGL (268 aa)) is amidoligase domain. Ser-15 is a CTP binding site. Ser-15 contributes to the UTP binding site. 16 to 21 (SLGKGI) lines the ATP pocket. Tyr-56 is a binding site for L-glutamine. Residue Asp-73 participates in ATP binding. 2 residues coordinate Mg(2+): Asp-73 and Glu-143. Residues 150-152 (DIE), 189-194 (KTKPTQ), and Lys-225 contribute to the CTP site. UTP-binding positions include 189–194 (KTKPTQ) and Lys-225. The 242-residue stretch at 296-537 (NIALVGKYDL…VKAAIENEKN (242 aa)) folds into the Glutamine amidotransferase type-1 domain. Residue Gly-357 coordinates L-glutamine. Cys-384 functions as the Nucleophile; for glutamine hydrolysis in the catalytic mechanism. Residues 385-388 (LGMQ), Glu-408, and Arg-465 contribute to the L-glutamine site. Catalysis depends on residues His-510 and Glu-512.

The protein belongs to the CTP synthase family. In terms of assembly, homotetramer.

The catalysed reaction is UTP + L-glutamine + ATP + H2O = CTP + L-glutamate + ADP + phosphate + 2 H(+). The enzyme catalyses L-glutamine + H2O = L-glutamate + NH4(+). It carries out the reaction UTP + NH4(+) + ATP = CTP + ADP + phosphate + 2 H(+). The protein operates within pyrimidine metabolism; CTP biosynthesis via de novo pathway; CTP from UDP: step 2/2. Its activity is regulated as follows. Allosterically activated by GTP, when glutamine is the substrate; GTP has no effect on the reaction when ammonia is the substrate. The allosteric effector GTP functions by stabilizing the protein conformation that binds the tetrahedral intermediate(s) formed during glutamine hydrolysis. Inhibited by the product CTP, via allosteric rather than competitive inhibition. Catalyzes the ATP-dependent amination of UTP to CTP with either L-glutamine or ammonia as the source of nitrogen. Regulates intracellular CTP levels through interactions with the four ribonucleotide triphosphates. This chain is CTP synthase, found in Bacteroides thetaiotaomicron (strain ATCC 29148 / DSM 2079 / JCM 5827 / CCUG 10774 / NCTC 10582 / VPI-5482 / E50).